A 275-amino-acid chain; its full sequence is Diaminopimelate epimerase (275 aa).

Substrate contacts are provided by Asn12, Gln45, and Asn65. Cys74 functions as the Proton donor in the catalytic mechanism. Substrate is bound by residues 75–76, Asn158, Asn191, and 209–210; these read GN and ER. Cys218 serves as the catalytic Proton acceptor. 219-220 lines the substrate pocket; the sequence is GT.

This sequence belongs to the diaminopimelate epimerase family. Homodimer.

The protein localises to the cytoplasm. It catalyses the reaction (2S,6S)-2,6-diaminopimelate = meso-2,6-diaminopimelate. The protein operates within amino-acid biosynthesis; L-lysine biosynthesis via DAP pathway; DL-2,6-diaminopimelate from LL-2,6-diaminopimelate: step 1/1. Its function is as follows. Catalyzes the stereoinversion of LL-2,6-diaminopimelate (L,L-DAP) to meso-diaminopimelate (meso-DAP), a precursor of L-lysine and an essential component of the bacterial peptidoglycan. The sequence is that of Diaminopimelate epimerase from Shewanella baltica (strain OS223).